The following is a 288-amino-acid chain: Male determiner protein Nix (288 aa).

RRM domains lie at 19–94 (YCIY…LPLS), 108–179 (IVVY…KVER), and 205–282 (RSIG…FVPE).

Male determiner protein (M-factor) that controls male somatic sexual differentiation. Acts as a dominant factor that regulates the mRNA splicing of doublesex (dsx) or fruitless (fru) transcripts and promotes expression of male splice forms of dsx and fru. In Aedes aegypti (Yellowfever mosquito), this protein is Male determiner protein Nix.